The following is a 261-amino-acid chain: 1-(5-phosphoribosyl)-5-[(5-phosphoribosylamino)methylideneamino] imidazole-4-carboxamide isomerase (261 aa).

The protein belongs to the HisA/HisF family.

It is found in the cytoplasm. The enzyme catalyses 1-(5-phospho-beta-D-ribosyl)-5-[(5-phospho-beta-D-ribosylamino)methylideneamino]imidazole-4-carboxamide = 5-[(5-phospho-1-deoxy-D-ribulos-1-ylimino)methylamino]-1-(5-phospho-beta-D-ribosyl)imidazole-4-carboxamide. It participates in amino-acid biosynthesis; L-histidine biosynthesis; L-histidine from 5-phospho-alpha-D-ribose 1-diphosphate: step 4/9. Functionally, catalyzes the isomerization of the aminoaldose moiety of ProFAR to the aminoketose of PRFAR. The polypeptide is 1-(5-phosphoribosyl)-5-[(5-phosphoribosylamino)methylideneamino] imidazole-4-carboxamide isomerase (Saccharomyces cerevisiae (strain ATCC 204508 / S288c) (Baker's yeast)).